Reading from the N-terminus, the 305-residue chain is U6 small nuclear RNA (adenine-(43)-N(6))-methyltransferase (305 aa).

Arg-85, Gly-110, Glu-133, Ser-164, and Asn-186 together coordinate S-adenosyl-L-methionine. The segment at 194–217 (SPNPFGGNTRNPQRRPAPNNVRTG) is disordered.

Belongs to the methyltransferase superfamily. METTL16/RlmF family.

The catalysed reaction is adenosine in U6 snRNA + S-adenosyl-L-methionine = N(6)-methyladenosine in U6 snRNA + S-adenosyl-L-homocysteine + H(+). RNA N6-methyltransferase that mediates N6-methylation of adenine of U6 small nuclear RNA (U6 snRNA). The chain is U6 small nuclear RNA (adenine-(43)-N(6))-methyltransferase from Drosophila pseudoobscura pseudoobscura (Fruit fly).